The primary structure comprises 349 residues: MRIEEDIKLGFKDVLIRPKRSILKSRSQVNLARCFSFKYSASIWSGIPIIAANMDTIGTFEMVKSLSKFNILTAVHKYYSFEEWKNFVCLSSKEILNHVIVSIGTSNIDFLKIKKIFLLSSELKYICIDVANGYSEHIVSFLKLVRDYFPDKIICAGNVVTGEMVEELILSGADIVKVGIGPGSVCTTRVKTGVGYPQLSAIIECADAAHGLNGQIISDGGCTVSGDIAKAFGGGADFVMLGGMLSGHKECSGDIIEEKSKKYMIFYGMSSVSAMQRYEGKIAGYRASEGKTVKIPFRGGVDSTIRDILGGLRSSCTYVGAEKLKELTKRTTFIRVTEQENCIFNAFKE.

An NADP(+)-binding site is contributed by 108 to 131 (IDFLKIKKIFLLSSELKYICIDVA). Gly181 and Gly183 together coordinate K(+). Residue Cys186 is the Thioimidate intermediate of the active site. 216 to 239 (IISDGGCTVSGDIAKAFGGGADFV) provides a ligand contact to NADP(+).

It belongs to the IMPDH/GMPR family. GuaC type 1 subfamily. As to quaternary structure, homotetramer.

It catalyses the reaction IMP + NH4(+) + NADP(+) = GMP + NADPH + 2 H(+). Catalyzes the irreversible NADPH-dependent deamination of GMP to IMP. It functions in the conversion of nucleobase, nucleoside and nucleotide derivatives of G to A nucleotides, and in maintaining the intracellular balance of A and G nucleotides. This is GMP reductase from Buchnera aphidicola subsp. Acyrthosiphon pisum (strain 5A).